The primary structure comprises 438 residues: GTPase Obg (438 aa).

An Obg domain is found at 2–160 (SMFLDQVTID…RKIELELKVL (159 aa)). A disordered region spans residues 128–147 (NIRFASPRNPAPEIAENGEP). In terms of domain architecture, OBG-type G spans 161–339 (ADVGLVGFPS…LLNATADLLE (179 aa)). Residues 167–174 (GFPSVGKS), 192–196 (FTTLV), 214–217 (DLPG), 284–287 (NKMD), and 320–322 (SGV) contribute to the GTP site. Ser174 and Thr194 together coordinate Mg(2+). In terms of domain architecture, OCT spans 360 to 438 (GFQPEGPEFT…IGNFEFEFVE (79 aa)).

It belongs to the TRAFAC class OBG-HflX-like GTPase superfamily. OBG GTPase family. Monomer. The cofactor is Mg(2+).

It localises to the cytoplasm. An essential GTPase which binds GTP, GDP and possibly (p)ppGpp with moderate affinity, with high nucleotide exchange rates and a fairly low GTP hydrolysis rate. Plays a role in control of the cell cycle, stress response, ribosome biogenesis and in those bacteria that undergo differentiation, in morphogenesis control. In Enterococcus faecalis (strain ATCC 700802 / V583), this protein is GTPase Obg.